The sequence spans 163 residues: Small ribosomal subunit protein bS18c (163 aa).

Disordered stretches follow at residues 1-54 (MYTS…PGDR) and 121-163 (ITGP…SSDC). Basic residues predominate over residues 7 to 48 (PFHKSKQTFHKSKQTFRKSKQTFRKFKQPFRKPKQPFRRRPR). Residues 140 to 163 (NSNRNLRNSNQTLRNNNRNLSSDC) show a composition bias toward low complexity.

This sequence belongs to the bacterial ribosomal protein bS18 family. As to quaternary structure, part of the 30S ribosomal subunit.

It is found in the plastid. It localises to the chloroplast. The sequence is that of Small ribosomal subunit protein bS18c from Oryza nivara (Indian wild rice).